Consider the following 240-residue polypeptide: Eukaryotic translation initiation factor 4E-3 (240 aa).

Residues 1 to 51 form a disordered region; the sequence is MVVTDSPVSGIMADQNIDPNTTTSPSPKEKHVSAIKAISGDEKAPSKEKKN. The segment covering 17 to 26 has biased composition (polar residues); the sequence is IDPNTTTSPS. Over residues 39–51 the composition is skewed to basic and acidic residues; sequence SGDEKAPSKEKKN. EIF4G-binding stretches follow at residues 65 to 68 and 75 to 111; these read HCFQ and FDNPSSKSNQVIWGSSLRSLYTFGTIEEFWSLYNNIH. MRNA contacts are provided by residues 83-88, Lys-115, and 133-134; these read NQVIWG and WE. Cys-138 and Cys-176 form a disulfide bridge. The interval 159 to 168 is EIF4G-binding; that stretch reads NTLLALVGEQ. MRNA is bound by residues 183 to 188 and 228 to 232; these read RARGDR and KTLDR.

The protein belongs to the eukaryotic initiation factor 4E family. As to quaternary structure, EIF4F is a multi-subunit complex, the composition of which varies with external and internal environmental conditions. It is composed of at least EIF4A, EIF4E and EIF4G. EIF4E is also known to interact with other partners. In higher plants two isoforms of EIF4F have been identified, named isoform EIF4F and isoform EIF(iso)4F. Isoform EIF4F has subunits p220 and p26, whereas isoform EIF(iso)4F has subunits p82 and p28. In terms of processing, according to the redox status, the Cys-138-Cys-176 disulfide bridge may have a role in regulating protein function by affecting its ability to bind capped mRNA.

It localises to the nucleus. The protein resides in the cytoplasm. In terms of biological role, component of the protein complex eIF4F, which is involved in the recognition of the mRNA cap, ATP-dependent unwinding of 5'-terminal secondary structure and recruitment of mRNA to the ribosome. Recognizes and binds the 7-methylguanosine-containing mRNA cap during an early step in the initiation of protein synthesis and facilitates ribosome binding by inducing the unwinding of the mRNAs secondary structures. This is Eukaryotic translation initiation factor 4E-3 from Arabidopsis thaliana (Mouse-ear cress).